Reading from the N-terminus, the 393-residue chain is Formate-dependent phosphoribosylglycinamide formyltransferase (393 aa).

N(1)-(5-phospho-beta-D-ribosyl)glycinamide-binding positions include 22–23 (EL) and Glu82. ATP contacts are provided by residues Arg114, Lys155, 160 to 165 (SSGHGQ), 195 to 198 (EGFI), and Glu203. The region spanning 119-308 (RLAAEELGLK…QFALHARAIL (190 aa)) is the ATP-grasp domain. Residues Glu267 and Glu279 each contribute to the Mg(2+) site. Residues Asp286, Lys356, and 363–364 (RR) contribute to the N(1)-(5-phospho-beta-D-ribosyl)glycinamide site.

The protein belongs to the PurK/PurT family. Homodimer.

The enzyme catalyses N(1)-(5-phospho-beta-D-ribosyl)glycinamide + formate + ATP = N(2)-formyl-N(1)-(5-phospho-beta-D-ribosyl)glycinamide + ADP + phosphate + H(+). It participates in purine metabolism; IMP biosynthesis via de novo pathway; N(2)-formyl-N(1)-(5-phospho-D-ribosyl)glycinamide from N(1)-(5-phospho-D-ribosyl)glycinamide (formate route): step 1/1. Functionally, involved in the de novo purine biosynthesis. Catalyzes the transfer of formate to 5-phospho-ribosyl-glycinamide (GAR), producing 5-phospho-ribosyl-N-formylglycinamide (FGAR). Formate is provided by PurU via hydrolysis of 10-formyl-tetrahydrofolate. The protein is Formate-dependent phosphoribosylglycinamide formyltransferase of Actinobacillus pleuropneumoniae serotype 5b (strain L20).